Consider the following 343-residue polypeptide: Flavonoid 3'-O-methyltransferase FOMT (343 aa).

6 residues coordinate S-adenosyl-L-homocysteine: glycine 184, aspartate 207, aspartate 227, methionine 228, methionine 240, and lysine 241. Histidine 245 (proton acceptor) is an active-site residue. Active-site residues include glutamate 273 and glutamate 305.

This sequence belongs to the class I-like SAM-binding methyltransferase superfamily. Cation-independent O-methyltransferase family. As to quaternary structure, homodimer.

The catalysed reaction is 3',5-dihydroxy-3,4',7-trimethoxyflavone + S-adenosyl-L-methionine = 5-hydroxy-3,7,3',4'-tetramethoxyflavone + S-adenosyl-L-homocysteine + H(+). The protein operates within flavonoid metabolism. Its activity is regulated as follows. Inhibited by nickel (NiCl(2) and NiSO(4)) and para-chloromercuribenzoate. Catalyzes the 3'- or 5'-O-methylation of partially methylated flavonols, but does not accept quercetin or caffeate as substrates for methylation. The sequence is that of Flavonoid 3'-O-methyltransferase FOMT from Chrysosplenium americanum (American golden saxifrage).